The sequence spans 110 residues: Protein YcgL (110 aa).

In terms of domain architecture, YcgL spans 14–98; sequence MFCVIYRSSK…PPEDLLKQHL (85 aa). Residues 88–110 form a disordered region; the sequence is PPPEDLLKQHLSSVGQNTSHADR. Over residues 97–110 the composition is skewed to polar residues; sequence HLSSVGQNTSHADR.

The protein is Protein YcgL of Salmonella typhi.